The following is a 1010-amino-acid chain: Phosphatidylserine decarboxylase proenzyme 2 (1010 aa).

C2 domains lie at 1–114 (MSQA…SSWE) and 247–370 (DFES…DKPC). 3 residues coordinate Ca(2+): Asp342, Ser345, and Asp348. One can recognise an EF-hand domain in the interval 458 to 493 (LRRQLWMHLLQGNDTQMKGTLDLIELNYFVDCLGSN). Active-site charge relay system; for autoendoproteolytic cleavage activity residues include Asp734, His793, and Ser880. Residue Ser880 is the Schiff-base intermediate with substrate; via pyruvic acid; for decarboxylase activity of the active site. Position 880 is a pyruvic acid (Ser); by autocatalysis (Ser880).

It belongs to the phosphatidylserine decarboxylase family. PSD-B subfamily. Eukaryotic type II sub-subfamily. As to quaternary structure, heterodimer of a large membrane-associated beta subunit and a small pyruvoyl-containing alpha subunit. Interacts with pstB2. This interaction may be a means to structurally tether the donor membrane (ER) harboring PstB2 to acceptor membranes (Golgi/endosomes) harboring PSD2 during PtdSer transport to the site of PtdEtn synthesis. Requires pyruvate as cofactor. Ca(2+) is required as a cofactor. In terms of processing, is synthesized initially as an inactive proenzyme. Formation of the active enzyme involves a self-maturation process in which the active site pyruvoyl group is generated from an internal serine residue via an autocatalytic post-translational modification. Two non-identical subunits are generated from the proenzyme in this reaction, and the pyruvate is formed at the N-terminus of the alpha chain, which is derived from the carboxyl end of the proenzyme. The autoendoproteolytic cleavage occurs by a canonical serine protease mechanism, in which the side chain hydroxyl group of the serine supplies its oxygen atom to form the C-terminus of the beta chain, while the remainder of the serine residue undergoes an oxidative deamination to produce ammonia and the pyruvoyl prosthetic group on the alpha chain. During this reaction, the Ser that is part of the protease active site of the proenzyme becomes the pyruvoyl prosthetic group, which constitutes an essential element of the active site of the mature decarboxylase.

Its subcellular location is the golgi apparatus membrane. The protein resides in the endosome membrane. It carries out the reaction a 1,2-diacyl-sn-glycero-3-phospho-L-serine + H(+) = a 1,2-diacyl-sn-glycero-3-phosphoethanolamine + CO2. The protein operates within phospholipid metabolism; phosphatidylethanolamine biosynthesis; phosphatidylethanolamine from CDP-diacylglycerol: step 2/2. Its function is as follows. Catalyzes the formation of phosphatidylethanolamine (PtdEtn) from phosphatidylserine (PtdSer). Plays a central role in phospholipid metabolism and in the interorganelle trafficking of phosphatidylserine. The polypeptide is Phosphatidylserine decarboxylase proenzyme 2 (Komagataella phaffii (strain GS115 / ATCC 20864) (Yeast)).